Here is a 425-residue protein sequence, read N- to C-terminus: Enolase (425 aa).

Glutamine 163 is a binding site for (2R)-2-phosphoglycerate. Residue glutamate 205 is the Proton donor of the active site. Positions 242, 285, and 312 each coordinate Mg(2+). (2R)-2-phosphoglycerate contacts are provided by lysine 337, arginine 366, serine 367, and lysine 388. Lysine 337 serves as the catalytic Proton acceptor.

Belongs to the enolase family. Mg(2+) serves as cofactor.

It is found in the cytoplasm. The protein localises to the secreted. Its subcellular location is the cell surface. It carries out the reaction (2R)-2-phosphoglycerate = phosphoenolpyruvate + H2O. It functions in the pathway carbohydrate degradation; glycolysis; pyruvate from D-glyceraldehyde 3-phosphate: step 4/5. Catalyzes the reversible conversion of 2-phosphoglycerate (2-PG) into phosphoenolpyruvate (PEP). It is essential for the degradation of carbohydrates via glycolysis. The sequence is that of Enolase from Rhodospirillum rubrum (strain ATCC 11170 / ATH 1.1.1 / DSM 467 / LMG 4362 / NCIMB 8255 / S1).